A 55-amino-acid chain; its full sequence is Conotoxin Cal6.40 (55 aa).

A signal peptide spans 1–21 (MSGSGVLLLTLLLLVPLSALA). Cystine bridges form between C24–C36, C29–C41, and C35–C50.

In terms of tissue distribution, expressed by the venom duct.

It localises to the secreted. Functionally, probable neurotoxin. This is Conotoxin Cal6.40 from Californiconus californicus (California cone).